Reading from the N-terminus, the 213-residue chain is Triosephosphate isomerase (213 aa).

Residue 7-9 coordinates substrate; sequence NLK. His-88 serves as the catalytic Electrophile. Glu-136 functions as the Proton acceptor in the catalytic mechanism. Ile-141 and Gly-174 together coordinate substrate.

This sequence belongs to the triosephosphate isomerase family. As to quaternary structure, homotetramer; dimer of dimers.

The protein localises to the cytoplasm. It catalyses the reaction D-glyceraldehyde 3-phosphate = dihydroxyacetone phosphate. It functions in the pathway carbohydrate biosynthesis; gluconeogenesis. It participates in carbohydrate degradation; glycolysis; D-glyceraldehyde 3-phosphate from glycerone phosphate: step 1/1. In terms of biological role, involved in the gluconeogenesis. Catalyzes stereospecifically the conversion of dihydroxyacetone phosphate (DHAP) to D-glyceraldehyde-3-phosphate (G3P). This is Triosephosphate isomerase from Thermoplasma volcanium (strain ATCC 51530 / DSM 4299 / JCM 9571 / NBRC 15438 / GSS1).